Consider the following 232-residue polypeptide: Noggin (232 aa).

The signal sequence occupies residues 1 to 27 (MERCPSLGVTLYALVVVLGLRAAPAGG). The N-linked (GlcNAc...) asparagine glycan is linked to Asn-62. The tract at residues 77–99 (GFMATSPPEDRPGGGGGPAGGAE) is disordered. Cystine bridges form between Cys-155/Cys-192, Cys-178/Cys-228, Cys-184/Cys-230, and Cys-207/Cys-215.

It belongs to the noggin family. As to quaternary structure, homodimer. Interacts with GDF5; inhibits chondrocyte differentiation. As to expression, expressed in condensing cartilage and immature chondrocytes.

It is found in the secreted. Essential for cartilage morphogenesis and joint formation. Inhibitor of bone morphogenetic proteins (BMP) signaling which is required for growth and patterning of the neural tube and somite. Inhibits chondrocyte differentiation through its interaction with GDF5 and, probably, GDF6. In Mus musculus (Mouse), this protein is Noggin (Nog).